Reading from the N-terminus, the 318-residue chain is 4-hydroxy-3-methylbut-2-enyl diphosphate reductase (318 aa).

A [4Fe-4S] cluster-binding site is contributed by Cys-12. Positions 41 and 74 each coordinate (2E)-4-hydroxy-3-methylbut-2-enyl diphosphate. Residues His-41 and His-74 each contribute to the dimethylallyl diphosphate site. His-41 and His-74 together coordinate isopentenyl diphosphate. Residue Cys-96 participates in [4Fe-4S] cluster binding. His-124 contributes to the (2E)-4-hydroxy-3-methylbut-2-enyl diphosphate binding site. Residue His-124 coordinates dimethylallyl diphosphate. An isopentenyl diphosphate-binding site is contributed by His-124. Glu-126 acts as the Proton donor in catalysis. Thr-167 is a binding site for (2E)-4-hydroxy-3-methylbut-2-enyl diphosphate. Cys-197 serves as a coordination point for [4Fe-4S] cluster. The (2E)-4-hydroxy-3-methylbut-2-enyl diphosphate site is built by Ser-225, Ser-226, Asn-227, and Ser-269. Dimethylallyl diphosphate is bound by residues Ser-225, Ser-226, Asn-227, and Ser-269. Residues Ser-225, Ser-226, Asn-227, and Ser-269 each coordinate isopentenyl diphosphate.

It belongs to the IspH family. It depends on [4Fe-4S] cluster as a cofactor.

It carries out the reaction isopentenyl diphosphate + 2 oxidized [2Fe-2S]-[ferredoxin] + H2O = (2E)-4-hydroxy-3-methylbut-2-enyl diphosphate + 2 reduced [2Fe-2S]-[ferredoxin] + 2 H(+). The enzyme catalyses dimethylallyl diphosphate + 2 oxidized [2Fe-2S]-[ferredoxin] + H2O = (2E)-4-hydroxy-3-methylbut-2-enyl diphosphate + 2 reduced [2Fe-2S]-[ferredoxin] + 2 H(+). It participates in isoprenoid biosynthesis; dimethylallyl diphosphate biosynthesis; dimethylallyl diphosphate from (2E)-4-hydroxy-3-methylbutenyl diphosphate: step 1/1. Its pathway is isoprenoid biosynthesis; isopentenyl diphosphate biosynthesis via DXP pathway; isopentenyl diphosphate from 1-deoxy-D-xylulose 5-phosphate: step 6/6. Catalyzes the conversion of 1-hydroxy-2-methyl-2-(E)-butenyl 4-diphosphate (HMBPP) into a mixture of isopentenyl diphosphate (IPP) and dimethylallyl diphosphate (DMAPP). Acts in the terminal step of the DOXP/MEP pathway for isoprenoid precursor biosynthesis. This is 4-hydroxy-3-methylbut-2-enyl diphosphate reductase from Francisella tularensis subsp. holarctica (strain LVS).